Reading from the N-terminus, the 542-residue chain is Membrane protein insertase YidC (542 aa).

Helical transmembrane passes span Asn6–Asp26, Leu326–Phe346, Phe350–Tyr370, Gly421–Leu441, Leu458–Met478, and Val501–Gly521.

This sequence belongs to the OXA1/ALB3/YidC family. Type 1 subfamily. Interacts with the Sec translocase complex via SecD. Specifically interacts with transmembrane segments of nascent integral membrane proteins during membrane integration.

Its subcellular location is the cell inner membrane. Its function is as follows. Required for the insertion and/or proper folding and/or complex formation of integral membrane proteins into the membrane. Involved in integration of membrane proteins that insert both dependently and independently of the Sec translocase complex, as well as at least some lipoproteins. Aids folding of multispanning membrane proteins. This is Membrane protein insertase YidC from Shewanella loihica (strain ATCC BAA-1088 / PV-4).